A 247-amino-acid chain; its full sequence is RNA-free ribonuclease P (247 aa).

Residues serine 223 to isoleucine 247 form a disordered region.

This sequence belongs to the HARP family.

It catalyses the reaction Endonucleolytic cleavage of RNA, removing 5'-extranucleotides from tRNA precursor.. Its function is as follows. RNA-free RNase P that catalyzes the removal of the 5'-leader sequence from pre-tRNA to produce the mature 5'-terminus. The protein is RNA-free ribonuclease P of Methanosarcina acetivorans (strain ATCC 35395 / DSM 2834 / JCM 12185 / C2A).